A 192-amino-acid polypeptide reads, in one-letter code: MKVILASKSPRRVEILEKIVKEFEVVQSNFDENTIDFKGDIEKYVKDLSRNKAIEVSKRLNEPSIVIAADTVVFQNGKVLEKPKNEEDAFSMLSSLSGNTHKVYSGICLINTYDDTVVTDCDCTEVRFSELNPRQIRNYINSGEPMDKAGAYGIQGLGGAFVEGIKGCYYNVMGLPLNKLYKALENYDITIL.

Asp-70 (proton acceptor) is an active-site residue.

This sequence belongs to the Maf family. YhdE subfamily. Requires a divalent metal cation as cofactor.

The protein resides in the cytoplasm. The catalysed reaction is dTTP + H2O = dTMP + diphosphate + H(+). It catalyses the reaction UTP + H2O = UMP + diphosphate + H(+). Its function is as follows. Nucleoside triphosphate pyrophosphatase that hydrolyzes dTTP and UTP. May have a dual role in cell division arrest and in preventing the incorporation of modified nucleotides into cellular nucleic acids. This is dTTP/UTP pyrophosphatase from Clostridium perfringens (strain ATCC 13124 / DSM 756 / JCM 1290 / NCIMB 6125 / NCTC 8237 / Type A).